The following is a 700-amino-acid chain: MKTRQRKRLFVSAALAVSLTMTVPMPASVNAAASDVTFTINTQSERAAISPNIYGTNQDLSGTENWSSRRLGGNRLTGYNWENNASSAGRDWLHYSDDFLCGNGGVPDTDCDKPGAVVTAFHDKSLENGAYSIVTLQMAGYVSRDKNGPVDESETAPSPRWDKVEFAKNAPFSLQPHLNDGQVYMDEEVNFLVNRYGNASTSTGIKAYSLDNEPALWSETHPRIHPEQLQAAELVAKSIDLSKAVKNVDPHAEIFGPALYGFGAYLSLQDAPGWPSLQGNYSWFIDYYLDQMKNAHTQNGKRLLDVLDVHWYPEAQGGGQRIVFGGAGNIDTQKARVQAPRSLWDPAYQEDSWIGTWFSSYLPLIPKLQSSIQTYYPGTKLAITESSYGGDNHISGGIATADALGIFGKYGVYAANYWQTEDNTDYTSAAYKLYRNYDGNKSGFGSIKVDAATSDTENSSVYASVTDEENSELHLIVLNKNFDDPINATFQLSGDKTYTSGRVWGFDQTGSDITEQAAITNINNNQFTYTLPPLSAYHIVLKADSTEPVNSDLVVQYKDGDRNNATDNQIKPHFNIQNKGTSPVDLSSLTLRYYFTKDSSAAMNGWIDWAKLGGSNIQISFGNHNGADSDTYAELGFSSGAGSIAEGGQSGEIQLRMSKADWSNFNEANDYSFDGAKTAYIDWDRVTLYQDGQLVWGIEP.

Residues 1-33 (MKTRQRKRLFVSAALAVSLTMTVPMPASVNAAA) form the signal peptide. The active site involves Glu213. The region spanning 550-700 (NSDLVVQYKD…DGQLVWGIEP (151 aa)) is the CBM3 domain.

Belongs to the glycosyl hydrolase 44 (cellulase J) family. A short form (EG-A-S) arises from post-translational proteolysis of approximately 150 AA at the C-terminus of EG-A-L.

The enzyme catalyses Endohydrolysis of (1-&gt;4)-beta-D-glucosidic linkages in cellulose, lichenin and cereal beta-D-glucans.. The protein is Endoglucanase A (celA) of Paenibacillus lautus (Bacillus lautus).